Here is a 139-residue protein sequence, read N- to C-terminus: Autophagy-related protein 31 (139 aa).

Belongs to the ATG31 family. As to quaternary structure, forms a stable complex with ATG17 and ATG29. Interacts directly with ATG29. The ATG17-ATG29-ATG31 complex interacts with the ATG1-ATG13 complex. Note=The interaction with the ATG1-ATG13 complex is induced by starvation.

Its subcellular location is the preautophagosomal structure. In terms of biological role, plays a role in starvation-induced autophagy. Involved in mitophagy. Functions with ATG17 and ATG29 at the preautophagosomal structure (PAS) in order to form normal autophagosomes under starvation conditions. This is Autophagy-related protein 31 from Kluyveromyces marxianus (strain DMKU3-1042 / BCC 29191 / NBRC 104275) (Yeast).